The sequence spans 121 residues: Basic phospholipase A2 homolog AppP2 (121 aa).

Intrachain disulfides connect Cys26–Cys115, Cys28–Cys44, Cys43–Cys95, Cys49–Cys121, Cys50–Cys88, Cys57–Cys81, and Cys75–Cys86. The important for membrane-damaging activities in eukaryotes and bacteria; heparin-binding stretch occupies residues 105-117 (KKYKAYFKLKCKK).

This sequence belongs to the phospholipase A2 family. Group II subfamily. K49 sub-subfamily. In terms of assembly, monomer. Expressed by the venom gland.

The protein localises to the secreted. Functionally, snake venom phospholipase A2 (PLA2) that lacks enzymatic activity. Displays edema-inducing activities. Is myotoxic. A model of myotoxic mechanism has been proposed: an apo Lys49-PLA2 is activated by the entrance of a hydrophobic molecule (e.g. fatty acid) at the hydrophobic channel of the protein leading to a reorientation of a monomer. This reorientation causes a transition between 'inactive' to 'active' states, causing alignment of C-terminal and membrane-docking sites (MDoS) side-by-side and putting the membrane-disruption sites (MDiS) in the same plane, exposed to solvent and in a symmetric position for both monomers. The MDoS region stabilizes the toxin on membrane by the interaction of charged residues with phospholipid head groups. Subsequently, the MDiS region destabilizes the membrane with penetration of hydrophobic residues. This insertion causes a disorganization of the membrane, allowing an uncontrolled influx of ions (i.e. calcium and sodium), and eventually triggering irreversible intracellular alterations and cell death. The chain is Basic phospholipase A2 homolog AppP2 from Agkistrodon piscivorus piscivorus (Eastern cottonmouth).